Reading from the N-terminus, the 367-residue chain is Alanine racemase (367 aa).

The Proton acceptor; specific for D-alanine role is filled by Lys-34. N6-(pyridoxal phosphate)lysine is present on Lys-34. Arg-129 contributes to the substrate binding site. Tyr-251 acts as the Proton acceptor; specific for L-alanine in catalysis. Met-299 contributes to the substrate binding site.

This sequence belongs to the alanine racemase family. The cofactor is pyridoxal 5'-phosphate.

It catalyses the reaction L-alanine = D-alanine. Its pathway is amino-acid biosynthesis; D-alanine biosynthesis; D-alanine from L-alanine: step 1/1. Its function is as follows. Catalyzes the interconversion of L-alanine and D-alanine. May also act on other amino acids. This Thiobacillus denitrificans (strain ATCC 25259 / T1) protein is Alanine racemase (alr).